A 301-amino-acid polypeptide reads, in one-letter code: Isonocardicin synthase (301 aa).

Monomer.

It carries out the reaction nocardicin G + S-adenosyl-L-methionine = isonocardicin C + S-methyl-5'-thioadenosine + H(+). The catalysed reaction is nocardicin E + S-adenosyl-L-methionine = isonocardicin A + S-methyl-5'-thioadenosine + H(+). Its pathway is antibiotic biosynthesis. In terms of biological role, involved in the biosynthesis of the beta-lactam antibiotic nocardicin A. In the presence of S-adenosyl-L-methionine (AdoMet), catalyzes the transfer of a 3-amino-3-carboxypropyl group from AdoMet to nocardicin G, forming isonocardicin C. Can also catalyze the transformation of nocardicin E and F to isonocardicin A and B, respectively, but in vivo substrate is probably nocardicin G. The chain is Isonocardicin synthase from Nocardia uniformis subsp. tsuyamanensis.